A 507-amino-acid chain; its full sequence is Dihydrolipoyl dehydrogenase 1, mitochondrial (507 aa).

The transit peptide at 1–36 directs the protein to the mitochondrion; that stretch reads MAMASLARRKAYFLTRNLSNSPTDALRFSFSLSRGF. Residues 73–82, lysine 91, glycine 155, and 184–186 contribute to the FAD site; these read EKRGALGGTC and TGS. The cysteines at positions 82 and 87 are disulfide-linked. Residues 221–228, glutamate 244, valine 278, and glycine 313 contribute to the NAD(+) site; that span reads GAGYIGLE. Residues aspartate 354 and 360–363 each bind FAD; that span reads MLAH. The active-site Proton acceptor is the histidine 486.

Belongs to the class-I pyridine nucleotide-disulfide oxidoreductase family. Homodimer. Part of both the glycine cleavage system composed of four proteins: P, T, L and H and of the pyruvate dehydrogenase complex containing multiple copies of three enzymatic components: pyruvate dehydrogenase (E1), dihydrolipoamide acetyltransferase (E2) and lipoamide dehydrogenase (E3). It depends on FAD as a cofactor. Post-translationally, S-nytrosylated at unknown positions. In terms of tissue distribution, preferentially expressed in leaves, flowers and siliques and at a lower level in roots and stems.

Its subcellular location is the mitochondrion matrix. It carries out the reaction N(6)-[(R)-dihydrolipoyl]-L-lysyl-[protein] + NAD(+) = N(6)-[(R)-lipoyl]-L-lysyl-[protein] + NADH + H(+). Lipoamide dehydrogenase is a component of the glycine decarboxylase (GDC) or glycine cleavage system as well as of the alpha-ketoacid dehydrogenase complexes. LPD1 is probably the protein most often associated with the glycine decarboxylase complex while LPD2 is probably incorporated into alpha-ketoacid dehydrogenase complexes. This chain is Dihydrolipoyl dehydrogenase 1, mitochondrial (LPD1), found in Arabidopsis thaliana (Mouse-ear cress).